Reading from the N-terminus, the 432-residue chain is Adenylosuccinate synthetase (432 aa).

GTP-binding positions include 12-18 (GDEGKGK) and 40-42 (GHT). The active-site Proton acceptor is the Asp13. Asp13 and Gly40 together coordinate Mg(2+). IMP-binding positions include 13-16 (DEGK), 38-41 (NAGH), Thr129, Arg143, Gln224, Thr239, and Arg303. His41 serves as the catalytic Proton donor. 299–305 (VTTGRRR) provides a ligand contact to substrate. GTP is bound by residues Arg305, 331–333 (KLD), and 413–415 (GVG).

Belongs to the adenylosuccinate synthetase family. Homodimer. It depends on Mg(2+) as a cofactor.

It localises to the cytoplasm. It carries out the reaction IMP + L-aspartate + GTP = N(6)-(1,2-dicarboxyethyl)-AMP + GDP + phosphate + 2 H(+). It participates in purine metabolism; AMP biosynthesis via de novo pathway; AMP from IMP: step 1/2. Its function is as follows. Plays an important role in the de novo pathway of purine nucleotide biosynthesis. Catalyzes the first committed step in the biosynthesis of AMP from IMP. The polypeptide is Adenylosuccinate synthetase (Mycobacterium marinum (strain ATCC BAA-535 / M)).